The following is a 178-amino-acid chain: Interleukin-10 (178 aa).

Residues 1–18 (MHSSALLCCLVVLTGVRA) form the signal peptide. 2 disulfide bridges follow: Cys30/Cys126 and Cys80/Cys132. The N-linked (GlcNAc...) asparagine glycan is linked to Asn134.

It belongs to the IL-10 family. Homodimer. Interacts with IL10RA and IL10RB.

It is found in the secreted. Major immune regulatory cytokine that acts on many cells of the immune system where it has profound anti-inflammatory functions, limiting excessive tissue disruption caused by inflammation. Mechanistically, IL10 binds to its heterotetrameric receptor comprising IL10RA and IL10RB leading to JAK1 and STAT2-mediated phosphorylation of STAT3. In turn, STAT3 translocates to the nucleus where it drives expression of anti-inflammatory mediators. Targets antigen-presenting cells (APCs) such as macrophages and monocytes and inhibits their release of pro-inflammatory cytokines including granulocyte-macrophage colony-stimulating factor /GM-CSF, granulocyte colony-stimulating factor/G-CSF, IL-1 alpha, IL-1 beta, IL-6, IL-8 and TNF-alpha. Also interferes with antigen presentation by reducing the expression of MHC-class II and co-stimulatory molecules, thereby inhibiting their ability to induce T cell activation. In addition, controls the inflammatory response of macrophages by reprogramming essential metabolic pathways including mTOR signaling. This is Interleukin-10 (IL10) from Papio hamadryas (Hamadryas baboon).